The sequence spans 1057 residues: DNA-directed RNA polymerase subunit beta' (1057 aa).

4 residues coordinate Zn(2+): C60, C62, C75, and C78. D449, D451, and D453 together coordinate Mg(2+). Zn(2+)-binding residues include C822, C896, C903, and C906.

The protein belongs to the RNA polymerase beta' chain family. As to quaternary structure, the RNAP catalytic core consists of 2 alpha, 1 beta, 1 beta' and 1 omega subunit. When a sigma factor is associated with the core the holoenzyme is formed, which can initiate transcription. The cofactor is Mg(2+). It depends on Zn(2+) as a cofactor.

The catalysed reaction is RNA(n) + a ribonucleoside 5'-triphosphate = RNA(n+1) + diphosphate. In terms of biological role, DNA-dependent RNA polymerase catalyzes the transcription of DNA into RNA using the four ribonucleoside triphosphates as substrates. This chain is DNA-directed RNA polymerase subunit beta', found in Staphylococcus aureus.